The chain runs to 911 residues: DNA mismatch repair protein MutS (911 aa).

Residue 660–667 (GPNMAGKS) participates in ATP binding.

It belongs to the DNA mismatch repair MutS family.

Its function is as follows. This protein is involved in the repair of mismatches in DNA. It is possible that it carries out the mismatch recognition step. This protein has a weak ATPase activity. This is DNA mismatch repair protein MutS from Rhodopseudomonas palustris (strain HaA2).